A 155-amino-acid polypeptide reads, in one-letter code: MTAVLDTLVAVRRTAMDLLARREHGRVELTRKLRQRGAPPEMIEAALDRLTEEGLLSESRYLESFVSYRARSGYGPMRIREELGQRGLQRSDIDLALRECGIDWQEQLRDVWQRKFAGRFPADARERAKQGRFLSYRGYSMDMISRLLSGRGMDD.

This sequence belongs to the RecX family.

Its subcellular location is the cytoplasm. Modulates RecA activity. In Pseudomonas fluorescens (strain ATCC BAA-477 / NRRL B-23932 / Pf-5), this protein is Regulatory protein RecX.